A 420-amino-acid chain; its full sequence is Pre-mRNA-splicing factor RBM22 (420 aa).

Residue alanine 2 is modified to N-acetylalanine. 2 positions are modified to phosphoserine: serine 4 and serine 102. Glycyl lysine isopeptide (Lys-Gly) (interchain with G-Cter in SUMO2) cross-links involve residues lysine 139 and lysine 149. The C3H1-type zinc finger occupies 159–186 (RNRPHICSFWVKGECKRGEECPYRHEKP). Residue lysine 212 is modified to N6-acetyllysine. The 74-residue stretch at 232-305 (TTLYVGGLGD…RRLNVKWGRS (74 aa)) folds into the RRM domain. Residue lysine 290 forms a Glycyl lysine isopeptide (Lys-Gly) (interchain with G-Cter in SUMO2) linkage. Disordered stretches follow at residues 303–343 (GRSQ…AAEE) and 371–420 (IAPP…HSSP). Over residues 309-318 (RGKEKEKDGT) the composition is skewed to basic and acidic residues.

This sequence belongs to the SLT11 family. Component of the pre-catalytic and catalytic spliceosome complexes. Component of the postcatalytic spliceosome P complex. Interacts with PDCD6; the interaction induces translocation of PDCD6 in the cytoplasm. Interacts with PPIL1.

Its subcellular location is the nucleus. It localises to the cytoplasm. In terms of biological role, required for pre-mRNA splicing as component of the activated spliceosome. Involved in the first step of pre-mRNA splicing. Binds directly to the internal stem-loop (ISL) domain of the U6 snRNA and to the pre-mRNA intron near the 5' splice site during the activation and catalytic phases of the spliceosome cycle. Involved in both translocations of the nuclear SLU7 to the cytoplasm and the cytosolic calcium-binding protein PDCD6 to the nucleus upon cellular stress responses. The sequence is that of Pre-mRNA-splicing factor RBM22 (Rbm22) from Rattus norvegicus (Rat).